The sequence spans 187 residues: Elongation factor P (187 aa).

It belongs to the elongation factor P family.

The protein localises to the cytoplasm. The protein operates within protein biosynthesis; polypeptide chain elongation. Functionally, involved in peptide bond synthesis. Stimulates efficient translation and peptide-bond synthesis on native or reconstituted 70S ribosomes in vitro. Probably functions indirectly by altering the affinity of the ribosome for aminoacyl-tRNA, thus increasing their reactivity as acceptors for peptidyl transferase. The sequence is that of Elongation factor P from Helicobacter pylori (strain G27).